A 127-amino-acid polypeptide reads, in one-letter code: UPF0716 protein YtzA (127 aa).

The next 4 membrane-spanning stretches (helical) occupy residues 3–22 (FLFL…FLFL), 26–46 (IGIL…AAAA), 70–90 (AIAD…PGFL), and 93–115 (LAGA…FKWL).

It belongs to the UPF0716 (FxsA) family.

The protein resides in the cell membrane. The protein is UPF0716 protein YtzA (ytzA) of Bacillus subtilis (strain 168).